The sequence spans 738 residues: LPS-assembly protein LptD (738 aa).

A signal peptide spans 1–26 (MEHKRNNILLAGLFFLLLGLVSIARA).

Belongs to the LptD family. As to quaternary structure, component of the lipopolysaccharide transport and assembly complex. Interacts with LptE and LptA.

It is found in the cell outer membrane. Together with LptE, is involved in the assembly of lipopolysaccharide (LPS) at the surface of the outer membrane. The protein is LPS-assembly protein LptD of Nitrosococcus oceani (strain ATCC 19707 / BCRC 17464 / JCM 30415 / NCIMB 11848 / C-107).